The primary structure comprises 523 residues: ATP synthase subunit alpha (523 aa).

179-186 (GDRQTGKT) contacts ATP.

Belongs to the ATPase alpha/beta chains family. In terms of assembly, F-type ATPases have 2 components, CF(1) - the catalytic core - and CF(0) - the membrane proton channel. CF(1) has five subunits: alpha(3), beta(3), gamma(1), delta(1), epsilon(1). CF(0) has three main subunits: a(1), b(2) and c(9-12). The alpha and beta chains form an alternating ring which encloses part of the gamma chain. CF(1) is attached to CF(0) by a central stalk formed by the gamma and epsilon chains, while a peripheral stalk is formed by the delta and b chains.

It localises to the cell inner membrane. It carries out the reaction ATP + H2O + 4 H(+)(in) = ADP + phosphate + 5 H(+)(out). Functionally, produces ATP from ADP in the presence of a proton gradient across the membrane. The alpha chain is a regulatory subunit. In Vibrio vulnificus (strain YJ016), this protein is ATP synthase subunit alpha.